The chain runs to 299 residues: tRNA pseudouridine synthase B (299 aa).

Aspartate 49 functions as the Nucleophile in the catalytic mechanism. Residues 241–299 (MPRVTVSGRAAARVLHGVAPAVRVEHPDGTTVAVVAANGALLALAEADGGGLRLRKVFG) enclose the PUA domain.

Belongs to the pseudouridine synthase TruB family. Type 1 subfamily.

The enzyme catalyses uridine(55) in tRNA = pseudouridine(55) in tRNA. In terms of biological role, responsible for synthesis of pseudouridine from uracil-55 in the psi GC loop of transfer RNAs. The polypeptide is tRNA pseudouridine synthase B (Symbiobacterium thermophilum (strain DSM 24528 / JCM 14929 / IAM 14863 / T)).